The sequence spans 166 residues: Testis-expressed protein 51 (166 aa).

A signal peptide spans 1–15 (MLPLLIICLLPAIEG). A helical membrane pass occupies residues 138-154 (SLWAVSLSSALLLAIAG).

Its subcellular location is the membrane. In Homo sapiens (Human), this protein is Testis-expressed protein 51.